Here is a 614-residue protein sequence, read N- to C-terminus: Dihydroxy-acid dehydratase (614 aa).

D81 is a Mg(2+) binding site. Position 122 (C122) interacts with [2Fe-2S] cluster. Mg(2+) is bound by residues D123 and K124. Position 124 is an N6-carboxylysine (K124). C196 is a [2Fe-2S] cluster binding site. E492 lines the Mg(2+) pocket. Catalysis depends on S518, which acts as the Proton acceptor.

This sequence belongs to the IlvD/Edd family. In terms of assembly, homodimer. The cofactor is [2Fe-2S] cluster. Requires Mg(2+) as cofactor.

The catalysed reaction is (2R)-2,3-dihydroxy-3-methylbutanoate = 3-methyl-2-oxobutanoate + H2O. The enzyme catalyses (2R,3R)-2,3-dihydroxy-3-methylpentanoate = (S)-3-methyl-2-oxopentanoate + H2O. It participates in amino-acid biosynthesis; L-isoleucine biosynthesis; L-isoleucine from 2-oxobutanoate: step 3/4. Its pathway is amino-acid biosynthesis; L-valine biosynthesis; L-valine from pyruvate: step 3/4. Functionally, functions in the biosynthesis of branched-chain amino acids. Catalyzes the dehydration of (2R,3R)-2,3-dihydroxy-3-methylpentanoate (2,3-dihydroxy-3-methylvalerate) into 2-oxo-3-methylpentanoate (2-oxo-3-methylvalerate) and of (2R)-2,3-dihydroxy-3-methylbutanoate (2,3-dihydroxyisovalerate) into 2-oxo-3-methylbutanoate (2-oxoisovalerate), the penultimate precursor to L-isoleucine and L-valine, respectively. This is Dihydroxy-acid dehydratase from Ruegeria sp. (strain TM1040) (Silicibacter sp.).